The sequence spans 204 residues: Minor allergen Alt a 7 (204 aa).

The 191-residue stretch at 5 to 195 folds into the Flavodoxin-like domain; it reads IAIVYYSMYG…NIAQAQGKAF (191 aa).

The protein belongs to the WrbA family.

The protein resides in the cytoplasm. In Alternaria alternata (Alternaria rot fungus), this protein is Minor allergen Alt a 7 (ALTA7).